A 148-amino-acid chain; its full sequence is SsrA-binding protein (148 aa).

It belongs to the SmpB family.

The protein resides in the cytoplasm. Required for rescue of stalled ribosomes mediated by trans-translation. Binds to transfer-messenger RNA (tmRNA), required for stable association of tmRNA with ribosomes. tmRNA and SmpB together mimic tRNA shape, replacing the anticodon stem-loop with SmpB. tmRNA is encoded by the ssrA gene; the 2 termini fold to resemble tRNA(Ala) and it encodes a 'tag peptide', a short internal open reading frame. During trans-translation Ala-aminoacylated tmRNA acts like a tRNA, entering the A-site of stalled ribosomes, displacing the stalled mRNA. The ribosome then switches to translate the ORF on the tmRNA; the nascent peptide is terminated with the 'tag peptide' encoded by the tmRNA and targeted for degradation. The ribosome is freed to recommence translation, which seems to be the essential function of trans-translation. This Burkholderia ambifaria (strain ATCC BAA-244 / DSM 16087 / CCUG 44356 / LMG 19182 / AMMD) (Burkholderia cepacia (strain AMMD)) protein is SsrA-binding protein.